Consider the following 729-residue polypeptide: Sodium-dependent neutral amino acid transporter B(0)AT2 (729 aa).

The Cytoplasmic segment spans residues 1-69 (MPKNSKVVKR…ARPAWNSKLQ (69 aa)). Phosphoserine is present on residues serine 25 and serine 55. 3 helical membrane passes run 70–90 (YILAQVGFSVGLGNVWRFPYL), 98–117 (AYLLPYLILLLVIGIPLFFL), and 142–162 (GIGFASCVVCFFVALYYNVII). The Extracellular segment spans residues 163-225 (GWSLFYFSQS…TSISESGGLN (63 aa)). Asparagine 187 and asparagine 213 each carry an N-linked (GlcNAc...) asparagine glycan. The next 4 helical transmembrane spans lie at 226 to 244 (WKMTICLLAAWVVVCLAMI), 253 to 270 (IMYFSSLFPYVVLICFLI), 306 to 323 (VFFALGLGFGGVIAFSSY), and 335 to 356 (VLVSFINFFTSILATLVVFAVL). Residues 357-452 (GFKANVINEK…FIAFTEAMTH (96 aa)) lie on the Extracellular side of the membrane. N-linked (GlcNAc...) asparagine glycans are attached at residues asparagine 383 and asparagine 394. The next 5 membrane-spanning stretches (helical) occupy residues 453 to 472 (FPASPFWSVMFFLMLVNLGL), 496 to 514 (ILTVICCLLAFCIGLIFVQ), 530 to 550 (TLPLLIVVILENIAVSFVYGI), 571 to 592 (YMWKYISPLMLLSLLIASIVNM), and 620 to 642 (VICISLMVLAILPIPVVFIIRRC). At 643-729 (NLIDDSSGNL…DMPDMPESDL (87 aa)) the chain is on the cytoplasmic side. Serine 687, serine 699, and serine 701 each carry phosphoserine.

The protein belongs to the sodium:neurotransmitter symporter (SNF) (TC 2.A.22) family. SLC6A15 subfamily.

It is found in the membrane. It catalyses the reaction L-leucine(in) + Na(+)(in) = L-leucine(out) + Na(+)(out). The enzyme catalyses L-isoleucine(in) + Na(+)(in) = L-isoleucine(out) + Na(+)(out). The catalysed reaction is L-methionine(in) + Na(+)(in) = L-methionine(out) + Na(+)(out). It carries out the reaction L-proline(in) + Na(+)(in) = L-proline(out) + Na(+)(out). It catalyses the reaction L-alanine(in) + Na(+)(in) = L-alanine(out) + Na(+)(out). The enzyme catalyses L-asparagine(in) + Na(+)(in) = L-asparagine(out) + Na(+)(out). The catalysed reaction is L-valine(in) + Na(+)(in) = L-valine(out) + Na(+)(out). It carries out the reaction L-cysteine(in) + Na(+)(in) = L-cysteine(out) + Na(+)(out). It catalyses the reaction L-glutamine(in) + Na(+)(in) = L-glutamine(out) + Na(+)(out). The enzyme catalyses L-serine(in) + Na(+)(in) = L-serine(out) + Na(+)(out). The catalysed reaction is L-threonine(in) + Na(+)(in) = L-threonine(out) + Na(+)(out). It carries out the reaction L-pipecolate(in) + Na(+)(in) = L-pipecolate(out) + Na(+)(out). It catalyses the reaction L-phenylalanine(in) + Na(+)(in) = L-phenylalanine(out) + Na(+)(out). Its function is as follows. Functions as a sodium-dependent neutral amino acid transporter. Exhibits preference for the branched-chain amino acids, particularly leucine, valine and isoleucine and methionine. Can also transport low-affinity substrates such as alanine, phenylalanine, glutamine and pipecolic acid. Mediates the saturable, pH-sensitive and electrogenic cotransport of proline and sodium ions with a stoichiometry of 1:1. May have a role as transporter for neurotransmitter precursors into neurons. In contrast to other members of the neurotransmitter transporter family, does not appear to be chloride-dependent. The protein is Sodium-dependent neutral amino acid transporter B(0)AT2 (SLC6A15) of Bos taurus (Bovine).